Here is a 217-residue protein sequence, read N- to C-terminus: Endo-1,4-beta-xylanase (217 aa).

Residues 1-17 form the signal peptide; the sequence is MQFLIPVVILCVSLVDS. The GH11 domain occupies 20-217; sequence VLYNNEIGFN…SSGFADITVS (198 aa). N-linked (GlcNAc...) asparagine glycans are attached at residues asparagine 56 and asparagine 80. Glutamate 107 serves as the catalytic Nucleophile. Catalysis depends on glutamate 204, which acts as the Proton donor.

This sequence belongs to the glycosyl hydrolase 11 (cellulase G) family. In terms of tissue distribution, expressed in larval carcasses and gut, and adult gut.

It is found in the secreted. It carries out the reaction Endohydrolysis of (1-&gt;4)-beta-D-xylosidic linkages in xylans.. The protein operates within glycan degradation; xylan degradation. The polypeptide is Endo-1,4-beta-xylanase (Phaedon cochleariae (Mustard beetle)).